The sequence spans 71 residues: UPF0435 protein BPUM_0734 (71 aa).

This sequence belongs to the UPF0435 family.

In Bacillus pumilus (strain SAFR-032), this protein is UPF0435 protein BPUM_0734.